A 211-amino-acid polypeptide reads, in one-letter code: Uracil phosphoribosyltransferase (211 aa).

5-phospho-alpha-D-ribose 1-diphosphate contacts are provided by residues arginine 77, arginine 102, and aspartate 129 to serine 137. Residues isoleucine 192 and glycine 197 to alanine 199 contribute to the uracil site. Aspartate 198 serves as a coordination point for 5-phospho-alpha-D-ribose 1-diphosphate.

Belongs to the UPRTase family. Mg(2+) serves as cofactor.

It carries out the reaction UMP + diphosphate = 5-phospho-alpha-D-ribose 1-diphosphate + uracil. The protein operates within pyrimidine metabolism; UMP biosynthesis via salvage pathway; UMP from uracil: step 1/1. Its activity is regulated as follows. Allosterically activated by GTP. In terms of biological role, catalyzes the conversion of uracil and 5-phospho-alpha-D-ribose 1-diphosphate (PRPP) to UMP and diphosphate. This is Uracil phosphoribosyltransferase from Corynebacterium glutamicum (strain R).